The following is a 476-amino-acid chain: MLKVYNTLTRCEEEFKTLNEKEVKMYVCGPTVYDNTHLGHGRTYVSFDIIRRYLEHMGYTVNLVINFTDIDDKIIKRAYEKEKDPKEISEQFIKVFLDDMATLKVKPADIYPKVTEHISEIIAFIEKLIEKGFAYKTEDGVYFEVKKFKNYGKLSNINLEDLVSGARIETSEKKKNQKDFALWKTAKPGEPKWESPFGSGRPGWHIECSAMSSKYLGEQFDIHGGGRDLSFPHHENEIAQSSAYSGKDWVNYWLHTGFVMVNGEKMSKSLGNFVTIGDISKEYSPEILRFFFIQRHYRSPIDYTAESMNHVKNNLEKIYNVIENIRISLEKSEKSRTWDENEFLLYDILKNSKNNFYNAMNSDFNTVKALKSVFEVSNGVNKYLSLTKTPSEGLLLKALDFYKIIGEIFGLFENYFKESSDSDEEEFVTFLIELRSDVRLQKNYEMSDKIRDGLKNLGYQIEDNPKEGTVFKKINI.

C28 is a Zn(2+) binding site. A 'HIGH' region motif is present at residues P30–H40. 3 residues coordinate Zn(2+): C208, H233, and E237. The 'KMSKS' region signature appears at K265–S269. Residue K268 coordinates ATP.

The protein belongs to the class-I aminoacyl-tRNA synthetase family. Zn(2+) serves as cofactor.

The protein localises to the cytoplasm. The catalysed reaction is tRNA(Cys) + L-cysteine + ATP = L-cysteinyl-tRNA(Cys) + AMP + diphosphate. The protein is Cysteine--tRNA ligase of Methanococcus maripaludis (strain DSM 14266 / JCM 13030 / NBRC 101832 / S2 / LL).